The sequence spans 178 residues: Probable chorismate pyruvate-lyase (178 aa).

Residues Arg-72, Leu-110, and Glu-169 each contribute to the substrate site.

The protein belongs to the UbiC family.

Its subcellular location is the cytoplasm. The enzyme catalyses chorismate = 4-hydroxybenzoate + pyruvate. The protein operates within cofactor biosynthesis; ubiquinone biosynthesis. Functionally, removes the pyruvyl group from chorismate, with concomitant aromatization of the ring, to provide 4-hydroxybenzoate (4HB) for the ubiquinone pathway. The protein is Probable chorismate pyruvate-lyase of Nitrosomonas europaea (strain ATCC 19718 / CIP 103999 / KCTC 2705 / NBRC 14298).